Reading from the N-terminus, the 132-residue chain is Small ribosomal subunit protein uS8 (132 aa).

The protein belongs to the universal ribosomal protein uS8 family. In terms of assembly, part of the 30S ribosomal subunit. Contacts proteins S5 and S12.

Its function is as follows. One of the primary rRNA binding proteins, it binds directly to 16S rRNA central domain where it helps coordinate assembly of the platform of the 30S subunit. This chain is Small ribosomal subunit protein uS8, found in Clostridium kluyveri (strain NBRC 12016).